The sequence spans 722 residues: Probable cation-transporting ATPase HI_0290 (722 aa).

One can recognise an HMA domain in the interval 9–75 (KKISIQIGGM…IIHKTGFSAH (67 aa)). Residues Cys-20 and Cys-23 each contribute to the a metal cation site. 6 consecutive transmembrane segments (helical) span residues 94-114 (LIVL…MIGG), 118-138 (LMLP…WLAI), 157-177 (VLVS…LFYH), 180-200 (HAMG…VSLG), 340-360 (VFVP…YILT), and 373-393 (VLVI…IMVG). The active-site 4-aspartylphosphate intermediate is Asp-422. 4 helical membrane-spanning segments follow: residues 523-543 (IWQI…GAFA), 608-628 (LGHI…LASA), 675-695 (LFFA…GFLS), and 697-717 (IIAG…ALRL). The Mg(2+) site is built by Asp-617 and Asp-621.

Belongs to the cation transport ATPase (P-type) (TC 3.A.3) family. Type IB subfamily.

It localises to the cell membrane. It catalyses the reaction ATP + H2O = ADP + phosphate + H(+). The chain is Probable cation-transporting ATPase HI_0290 from Haemophilus influenzae (strain ATCC 51907 / DSM 11121 / KW20 / Rd).